Consider the following 436-residue polypeptide: GTPase Der (436 aa).

2 consecutive EngA-type G domains span residues 4-167 (PVIA…PKIE) and 176-351 (IRFS…ESHS). GTP contacts are provided by residues 10-17 (GRPNVGKS), 57-61 (DTGGI), 119-122 (NKVD), 182-189 (GRPNVGKS), 229-233 (DTAGM), and 294-297 (NKWD). A KH-like domain is found at 352–436 (IRVQTNVLND…PIHIIARARD (85 aa)).

The protein belongs to the TRAFAC class TrmE-Era-EngA-EngB-Septin-like GTPase superfamily. EngA (Der) GTPase family. In terms of assembly, associates with the 50S ribosomal subunit.

Functionally, GTPase that plays an essential role in the late steps of ribosome biogenesis. This chain is GTPase Der, found in Bacillus cereus (strain G9842).